Consider the following 269-residue polypeptide: Magnetosome protein MamX (269 aa).

Topologically, residues 1 to 10 (MNTKAVAHPD) are cytoplasmic. The helical transmembrane segment at 11–31 (IAVWIMALGIAFSMALVLTAL) threads the bilayer. Topologically, residues 32 to 269 (FNANPWEDHT…NVGGVDAEER (238 aa)) are lumenal. Residues 48–71 (IVAGMAAPHRDGREKMVCSSCHIV) carry the MCR (magnetochrome) 1 motif. The heme site is built by Cys-65, Cys-68, His-69, Cys-104, Cys-107, and His-108. The MCR 2 motif lies at 87 to 110 (IVEGTPAPHVDGREKMACASCHTI).

The protein belongs to the magnetosome MamX family. As to quaternary structure, probably interacts with FtsZ-like and MamY proteins. Heme serves as cofactor.

It localises to the magnetosome membrane. Required for correct biomineralization of the magnetosome, maybe via redox control. May function with MamY, MamZ amd Mms6 in biomineralization. The protein is Magnetosome protein MamX of Magnetospirillum gryphiswaldense (strain DSM 6361 / JCM 21280 / NBRC 15271 / MSR-1).